Here is a 510-residue protein sequence, read N- to C-terminus: DNA nucleotidylexotransferase (510 aa).

Positions 1-22 (MDPLQAVHLGPRKKRPRQLGTP) are disordered. A Nuclear localization signal motif is present at residues 11–17 (PRKKRPR). The BRCT domain maps to 27–124 (PYDIRFRDLV…KPVEMMGRHQ (98 aa)). At Ser-134 the chain carries Phosphoserine. The mediates interaction with DNTTIP2 stretch occupies residues 151–510 (SQYACQRRTT…DYIEPWERNA (360 aa)). The tract at residues 258–262 (VGLKT) is involved in DNA binding. A 2'-deoxyribonucleoside 5'-triphosphate is bound by residues 333-338 (GFRRGK) and 342-345 (HDVD). Mg(2+)-binding residues include Asp-343, Asp-345, and Asp-434. An a 2'-deoxyribonucleoside 5'-triphosphate-binding site is contributed by 449-450 (GW).

The protein belongs to the DNA polymerase type-X family. Interacts with PRP19 and DNTTIP1. Forms a ternary complex with DNTTIP2 and core histone. Released from this complex by PCNA. Interacts with TRERF1. The cofactor is Mg(2+). Isoform TDT-L: Expressed in the thymus, and, at lower levels, in the bone marrow. Detected in both cycling and noncycling pro-B and pre-B cells (at protein level). Isoform TDT-S: Expressed in both cycling and noncycling pro-B, but not pre-B, cells (at protein level). Not detected in mature peripheral or germinal center B cells.

It localises to the nucleus. Its subcellular location is the cytoplasm. It carries out the reaction DNA(n) + a 2'-deoxyribonucleoside 5'-triphosphate = DNA(n+1) + diphosphate. Transferase that catalyzes the nontemplated addition of nucleoside triphosphate to coding ends during V(D)J recombination (N addition). Involved in the generation of diversity in the antigen-binding region of immunoglobulin heavy and light chains and T-cell receptors during B- and T-cell development. Does not act on double-stranded DNA with blunt ends. In terms of biological role, 3'-to-5' DNA exonuclease. Involved in the generation of diversity in the antigen-binding region of immunoglobulin heavy and light chains and T-cell receptors during B- and T-cell development. Acts on single-stranded and double-stranded DNA with 3' or 5' extensions, but not on double-stranded DNA with blunt ends. Attenuates not only isoform TDT-S-catalyzed N addition, but also P (palindromic) addition in coding joins. Lacks terminal transferase activity. This is DNA nucleotidylexotransferase (Dntt) from Mus musculus (Mouse).